A 556-amino-acid chain; its full sequence is 2-succinyl-5-enolpyruvyl-6-hydroxy-3-cyclohexene-1-carboxylate synthase (556 aa).

Belongs to the TPP enzyme family. MenD subfamily. In terms of assembly, homodimer. Mg(2+) is required as a cofactor. It depends on Mn(2+) as a cofactor. Requires thiamine diphosphate as cofactor.

The enzyme catalyses isochorismate + 2-oxoglutarate + H(+) = 5-enolpyruvoyl-6-hydroxy-2-succinyl-cyclohex-3-ene-1-carboxylate + CO2. The protein operates within quinol/quinone metabolism; 1,4-dihydroxy-2-naphthoate biosynthesis; 1,4-dihydroxy-2-naphthoate from chorismate: step 2/7. It functions in the pathway quinol/quinone metabolism; menaquinone biosynthesis. Functionally, catalyzes the thiamine diphosphate-dependent decarboxylation of 2-oxoglutarate and the subsequent addition of the resulting succinic semialdehyde-thiamine pyrophosphate anion to isochorismate to yield 2-succinyl-5-enolpyruvyl-6-hydroxy-3-cyclohexene-1-carboxylate (SEPHCHC). The chain is 2-succinyl-5-enolpyruvyl-6-hydroxy-3-cyclohexene-1-carboxylate synthase from Escherichia coli O8 (strain IAI1).